A 62-amino-acid polypeptide reads, in one-letter code: U8-theraphotoxin-Cg1a 2 (62 aa).

The first 21 residues, 1-21, serve as a signal peptide directing secretion; it reads MKTLVLFIIFGLAALFLLSSA. Positions 22 to 29 are excised as a propeptide; the sequence is TELEETER. 3 disulfides stabilise this stretch: cysteine 31/cysteine 46, cysteine 38/cysteine 51, and cysteine 45/cysteine 58.

This sequence belongs to the neurotoxin 10 (Hwtx-1) family. 30 (Jztx-14) subfamily. As to expression, expressed by the venom gland.

It localises to the secreted. Its function is as follows. Probable ion channel inhibitor. The sequence is that of U8-theraphotoxin-Cg1a 2 from Chilobrachys guangxiensis (Chinese earth tiger tarantula).